Consider the following 262-residue polypeptide: Octanoyltransferase (262 aa).

In terms of domain architecture, BPL/LPL catalytic spans 60–248; sequence GTADELVWLV…AFEMVFGPTR (189 aa). Substrate contacts are provided by residues 99–106, 179–181, and 192–194; these read RGGEYTYH, AIG, and GLS. Catalysis depends on Cys210, which acts as the Acyl-thioester intermediate.

The protein belongs to the LipB family.

Its subcellular location is the cytoplasm. It carries out the reaction octanoyl-[ACP] + L-lysyl-[protein] = N(6)-octanoyl-L-lysyl-[protein] + holo-[ACP] + H(+). It functions in the pathway protein modification; protein lipoylation via endogenous pathway; protein N(6)-(lipoyl)lysine from octanoyl-[acyl-carrier-protein]: step 1/2. In terms of biological role, catalyzes the transfer of endogenously produced octanoic acid from octanoyl-acyl-carrier-protein onto the lipoyl domains of lipoate-dependent enzymes. Lipoyl-ACP can also act as a substrate although octanoyl-ACP is likely to be the physiological substrate. This Sinorhizobium medicae (strain WSM419) (Ensifer medicae) protein is Octanoyltransferase.